We begin with the raw amino-acid sequence, 129 residues long: Small ribosomal subunit protein uS13 (129 aa).

The interval G96–A129 is disordered.

The protein belongs to the universal ribosomal protein uS13 family. Part of the 30S ribosomal subunit. Forms a loose heterodimer with protein S19. Forms two bridges to the 50S subunit in the 70S ribosome.

Its function is as follows. Located at the top of the head of the 30S subunit, it contacts several helices of the 16S rRNA. In the 70S ribosome it contacts the 23S rRNA (bridge B1a) and protein L5 of the 50S subunit (bridge B1b), connecting the 2 subunits; these bridges are implicated in subunit movement. Contacts the tRNAs in the A and P-sites. The chain is Small ribosomal subunit protein uS13 from Opitutus terrae (strain DSM 11246 / JCM 15787 / PB90-1).